The primary structure comprises 75 residues: Phytosulfokines (75 aa).

The first 22 residues, 1 to 22, serve as a signal peptide directing secretion; it reads MSSKAITLLLIALLFSLSLAQA. Positions 23-66 are excised as a propeptide; that stretch reads ARPLQPADSTKSVHVIPEKVHDEACEGVGEEECLMRRTLTAHVD. Sulfotyrosine occurs at positions 67 and 69. The propeptide occupies 72–75; that stretch reads DHNP.

Belongs to the phytosulfokine family. In terms of processing, sulfation is important for activity and for the binding to a putative membrane receptor. Deletion of the sulfate groups of Tyr-67 and Tyr-69 resulted in compounds with respectively 0.6% and 4% of the activity. Post-translationally, PSK-alpha is produced by endopeptidase digestion. PSK-beta is produced from PSK-alpha by exopeptidase digestion.

Its subcellular location is the secreted. Its function is as follows. Promotes plant cell differentiation, organogenesis and somatic embryogenesis as well as cell proliferation. The chain is Phytosulfokines (PSK) from Asparagus officinalis (Garden asparagus).